The primary structure comprises 220 residues: ATP-dependent Clp protease proteolytic subunit 1 (220 aa).

Ser-118 serves as the catalytic Nucleophile. Residue His-143 is part of the active site.

It belongs to the peptidase S14 family. In terms of assembly, fourteen ClpP subunits assemble into 2 heptameric rings which stack back to back to give a disk-like structure with a central cavity, resembling the structure of eukaryotic proteasomes.

The protein resides in the cytoplasm. It catalyses the reaction Hydrolysis of proteins to small peptides in the presence of ATP and magnesium. alpha-casein is the usual test substrate. In the absence of ATP, only oligopeptides shorter than five residues are hydrolyzed (such as succinyl-Leu-Tyr-|-NHMec, and Leu-Tyr-Leu-|-Tyr-Trp, in which cleavage of the -Tyr-|-Leu- and -Tyr-|-Trp bonds also occurs).. Cleaves peptides in various proteins in a process that requires ATP hydrolysis. Has a chymotrypsin-like activity. Plays a major role in the degradation of misfolded proteins. The chain is ATP-dependent Clp protease proteolytic subunit 1 from Rhodococcus jostii (strain RHA1).